The sequence spans 107 residues: UPF0122 protein STH1464 (107 aa).

This sequence belongs to the UPF0122 family.

Its function is as follows. Might take part in the signal recognition particle (SRP) pathway. This is inferred from the conservation of its genetic proximity to ftsY/ffh. May be a regulatory protein. This chain is UPF0122 protein STH1464, found in Symbiobacterium thermophilum (strain DSM 24528 / JCM 14929 / IAM 14863 / T).